The sequence spans 103 residues: Small ribosomal subunit protein uS10 (103 aa).

Belongs to the universal ribosomal protein uS10 family. Part of the 30S ribosomal subunit.

Its function is as follows. Involved in the binding of tRNA to the ribosomes. This Pseudomonas savastanoi pv. phaseolicola (strain 1448A / Race 6) (Pseudomonas syringae pv. phaseolicola (strain 1448A / Race 6)) protein is Small ribosomal subunit protein uS10.